A 115-amino-acid polypeptide reads, in one-letter code: Large ribosomal subunit protein bL19 (115 aa).

This sequence belongs to the bacterial ribosomal protein bL19 family.

This protein is located at the 30S-50S ribosomal subunit interface and may play a role in the structure and function of the aminoacyl-tRNA binding site. In Coxiella burnetii (strain CbuK_Q154) (Coxiella burnetii (strain Q154)), this protein is Large ribosomal subunit protein bL19.